Reading from the N-terminus, the 262-residue chain is Flap endonuclease Xni (262 aa).

D105 provides a ligand contact to Mg(2+). The region spanning 164–251 (SQFLDLMALA…NINLKDFRAN (88 aa)) is the 5'-3' exonuclease domain. Residues L172, A173, P181, I183, and I186 each coordinate K(+). The interval 185-190 (GIGPKS) is interaction with DNA.

The protein belongs to the Xni family. Mg(2+) serves as cofactor. It depends on K(+) as a cofactor.

Has flap endonuclease activity. During DNA replication, flap endonucleases cleave the 5'-overhanging flap structure that is generated by displacement synthesis when DNA polymerase encounters the 5'-end of a downstream Okazaki fragment. This is Flap endonuclease Xni from Shewanella putrefaciens (strain CN-32 / ATCC BAA-453).